Consider the following 197-residue polypeptide: uncharacterized protein (197 aa).

The next 4 membrane-spanning stretches (helical) occupy residues 11–31 (IALI…ISAS), 85–105 (STFM…SIFV), 109–129 (AVVV…VVLF), and 174–194 (VGTG…YPFI).

The protein resides in the cell membrane. This is an uncharacterized protein from Methanocaldococcus jannaschii (strain ATCC 43067 / DSM 2661 / JAL-1 / JCM 10045 / NBRC 100440) (Methanococcus jannaschii).